A 326-amino-acid chain; its full sequence is Olfactory receptor 11H2 (326 aa).

Over 1–44 (MCPLTLHVTGLMNVSEPNSSFAFVNEFILQGFSCEWTIQIFLFS) the chain is Extracellular. Asparagine 13 and asparagine 18 each carry an N-linked (GlcNAc...) asparagine glycan. A helical membrane pass occupies residues 45 to 65 (LFTTIYALTITGNGAIAFVLW). The Cytoplasmic segment spans residues 66–72 (CDRRLHT). Residues 73 to 93 (PMYMFLGNFSFLEIWYVSSTV) form a helical membrane-spanning segment. At 94-112 (PKMLVNFLSEKKNISFAGC) the chain is on the extracellular side. An N-linked (GlcNAc...) asparagine glycan is attached at asparagine 106. An intrachain disulfide couples cysteine 112 to cysteine 194. The chain crosses the membrane as a helical span at residues 113–133 (FLQFYFFFSLGTSECLLLTVM). Residues 134–158 (AFDQYLAICRPLLYPNIMTGHLYAK) are Cytoplasmic-facing. Residues 159–179 (LVILCWVCGFLWFLIPIVLIS) form a helical membrane-spanning segment. At 180–216 (QKPFCGPNIIDHVVCDPGPLFALDCVSAPRIQLFCYT) the chain is on the extracellular side. The helical transmembrane segment at 217–237 (LSSLVIFGNFLFIIGSYTLVL) threads the bilayer. Over 238 to 259 (KAVLGMPSSTGRHKAFSTCGSH) the chain is Cytoplasmic. Residues 260 to 280 (LAVVSLCYSPLMVMYVSPGLG) traverse the membrane as a helical segment. The Extracellular segment spans residues 281–287 (HSTGMQK). Residues 288 to 308 (IETLFYAMVTPLFNPLIYSLQ) form a helical membrane-spanning segment. Residues 309–326 (NKEIKAALRKVLGSSNII) lie on the Cytoplasmic side of the membrane.

It belongs to the G-protein coupled receptor 1 family.

The protein resides in the cell membrane. In terms of biological role, odorant receptor. The protein is Olfactory receptor 11H2 (OR11H2) of Homo sapiens (Human).